We begin with the raw amino-acid sequence, 299 residues long: Probable lipid kinase YegS (299 aa).

The region spanning 2-133 is the DAGKc domain; the sequence is ANFPASLLIL…IDMARVNDKT (132 aa). ATP is bound by residues threonine 40, 66–72, and threonine 95; that span reads GDGTINE. 3 residues coordinate Mg(2+): leucine 215, aspartate 218, and leucine 220. Catalysis depends on glutamate 271, which acts as the Proton acceptor.

It belongs to the diacylglycerol/lipid kinase family. YegS lipid kinase subfamily. Requires Mg(2+) as cofactor. Ca(2+) is required as a cofactor.

It is found in the cytoplasm. Probably phosphorylates lipids; the in vivo substrate is unknown. In Salmonella heidelberg (strain SL476), this protein is Probable lipid kinase YegS.